The primary structure comprises 37 residues: Large ribosomal subunit protein bL36c (37 aa).

This sequence belongs to the bacterial ribosomal protein bL36 family.

The protein resides in the plastid. Its subcellular location is the chloroplast. The chain is Large ribosomal subunit protein bL36c from Pelargonium hortorum (Common geranium).